A 448-amino-acid polypeptide reads, in one-letter code: Exodeoxyribonuclease 7 large subunit (448 aa).

It belongs to the XseA family. As to quaternary structure, heterooligomer composed of large and small subunits.

It is found in the cytoplasm. It catalyses the reaction Exonucleolytic cleavage in either 5'- to 3'- or 3'- to 5'-direction to yield nucleoside 5'-phosphates.. Its function is as follows. Bidirectionally degrades single-stranded DNA into large acid-insoluble oligonucleotides, which are then degraded further into small acid-soluble oligonucleotides. In Exiguobacterium sp. (strain ATCC BAA-1283 / AT1b), this protein is Exodeoxyribonuclease 7 large subunit.